A 331-amino-acid chain; its full sequence is GTP 3',8-cyclase (331 aa).

Positions 6–234 (PFNRKIDYLR…PATGKSHDGP (229 aa)) constitute a Radical SAM core domain. Position 15 (Arg-15) interacts with GTP. Positions 22 and 26 each coordinate [4Fe-4S] cluster. Tyr-28 contributes to the S-adenosyl-L-methionine binding site. Residue Cys-29 coordinates [4Fe-4S] cluster. GTP is bound at residue Arg-66. Residue Gly-70 coordinates S-adenosyl-L-methionine. Ser-97 contacts GTP. Position 121 (Ser-121) interacts with S-adenosyl-L-methionine. Lys-158 is a GTP binding site. Met-192 serves as a coordination point for S-adenosyl-L-methionine. Positions 258 and 261 each coordinate [4Fe-4S] cluster. 263–265 (RVR) provides a ligand contact to GTP. Cys-275 is a binding site for [4Fe-4S] cluster.

It belongs to the radical SAM superfamily. MoaA family. In terms of assembly, monomer and homodimer. Requires [4Fe-4S] cluster as cofactor.

The catalysed reaction is GTP + AH2 + S-adenosyl-L-methionine = (8S)-3',8-cyclo-7,8-dihydroguanosine 5'-triphosphate + 5'-deoxyadenosine + L-methionine + A + H(+). It participates in cofactor biosynthesis; molybdopterin biosynthesis. Its function is as follows. Catalyzes the cyclization of GTP to (8S)-3',8-cyclo-7,8-dihydroguanosine 5'-triphosphate. In Hydrogenovibrio crunogenus (strain DSM 25203 / XCL-2) (Thiomicrospira crunogena), this protein is GTP 3',8-cyclase.